We begin with the raw amino-acid sequence, 135 residues long: Basic phospholipase A2 10 (135 aa).

Intrachain disulfides connect cysteine 28/cysteine 87, cysteine 42/cysteine 134, cysteine 44/cysteine 60, cysteine 59/cysteine 115, cysteine 66/cysteine 108, cysteine 76/cysteine 101, and cysteine 94/cysteine 106. Ca(2+) is bound by residues tyrosine 43, glycine 45, and glycine 47. The active site involves histidine 63. Residue aspartate 64 coordinates Ca(2+). The active site involves aspartate 109.

Belongs to the phospholipase A2 family. Group I subfamily. D49 sub-subfamily. Requires Ca(2+) as cofactor. Expressed by the venom gland.

The protein localises to the secreted. It catalyses the reaction a 1,2-diacyl-sn-glycero-3-phosphocholine + H2O = a 1-acyl-sn-glycero-3-phosphocholine + a fatty acid + H(+). Its function is as follows. Snake venom phospholipase A2 (PLA2) that inhibits neuromuscular transmission by blocking acetylcholine release from the nerve termini. PLA2 catalyzes the calcium-dependent hydrolysis of the 2-acyl groups in 3-sn-phosphoglycerides. In Bungarus fasciatus (Banded krait), this protein is Basic phospholipase A2 10.